The sequence spans 313 residues: Ribosomal RNA small subunit methyltransferase H (313 aa).

S-adenosyl-L-methionine-binding positions include 35–37, Asp-55, Phe-79, Asp-101, and Gln-108; that span reads GGH.

It belongs to the methyltransferase superfamily. RsmH family.

Its subcellular location is the cytoplasm. The enzyme catalyses cytidine(1402) in 16S rRNA + S-adenosyl-L-methionine = N(4)-methylcytidine(1402) in 16S rRNA + S-adenosyl-L-homocysteine + H(+). In terms of biological role, specifically methylates the N4 position of cytidine in position 1402 (C1402) of 16S rRNA. This chain is Ribosomal RNA small subunit methyltransferase H, found in Musicola paradisiaca (strain Ech703) (Dickeya paradisiaca).